The following is a 335-amino-acid chain: Large ribosomal subunit protein uL10 (335 aa).

A disordered region spans residues 304–335 (GAAAPVEEAPVEEKKEEKKEEAAAPAGLGMLF). Positions 314–325 (VEEKKEEKKEEA) are enriched in basic and acidic residues.

It belongs to the universal ribosomal protein uL10 family. As to quaternary structure, part of the 50S ribosomal subunit. Homodimer, it forms part of the ribosomal stalk which helps the ribosome interact with GTP-bound translation factors. Forms both a pentameric L10(L12)2(L12)2 and heptameric L10(L12)2(L12)2(L12)2 complex, where L10 forms an elongated spine to which the L12 dimers bind in a sequential fashion. The proportion of heptameric complexes increases during cell growth.

Functionally, forms part of the ribosomal stalk, playing a central role in the interaction of the ribosome with GTP-bound translation factors. This chain is Large ribosomal subunit protein uL10, found in Methanococcus maripaludis (strain DSM 14266 / JCM 13030 / NBRC 101832 / S2 / LL).